A 433-amino-acid polypeptide reads, in one-letter code: tRNA(Ile)-lysidine synthase (433 aa).

37–42 (SGGKDS) contacts ATP.

The protein belongs to the tRNA(Ile)-lysidine synthase family.

It is found in the cytoplasm. The catalysed reaction is cytidine(34) in tRNA(Ile2) + L-lysine + ATP = lysidine(34) in tRNA(Ile2) + AMP + diphosphate + H(+). Ligates lysine onto the cytidine present at position 34 of the AUA codon-specific tRNA(Ile) that contains the anticodon CAU, in an ATP-dependent manner. Cytidine is converted to lysidine, thus changing the amino acid specificity of the tRNA from methionine to isoleucine. The sequence is that of tRNA(Ile)-lysidine synthase from Leptospira interrogans serogroup Icterohaemorrhagiae serovar copenhageni (strain Fiocruz L1-130).